Here is a 180-residue protein sequence, read N- to C-terminus: Acireductone dioxygenase (180 aa).

Residues His-97, His-99, Glu-103, and His-141 each coordinate Fe(2+). Ni(2+)-binding residues include His-97, His-99, Glu-103, and His-141.

Belongs to the acireductone dioxygenase (ARD) family. Monomer. It depends on Fe(2+) as a cofactor. Ni(2+) is required as a cofactor.

The enzyme catalyses 1,2-dihydroxy-5-(methylsulfanyl)pent-1-en-3-one + O2 = 3-(methylsulfanyl)propanoate + CO + formate + 2 H(+). It catalyses the reaction 1,2-dihydroxy-5-(methylsulfanyl)pent-1-en-3-one + O2 = 4-methylsulfanyl-2-oxobutanoate + formate + 2 H(+). It participates in amino-acid biosynthesis; L-methionine biosynthesis via salvage pathway; L-methionine from S-methyl-5-thio-alpha-D-ribose 1-phosphate: step 5/6. Its function is as follows. Catalyzes 2 different reactions between oxygen and the acireductone 1,2-dihydroxy-3-keto-5-methylthiopentene (DHK-MTPene) depending upon the metal bound in the active site. Fe-containing acireductone dioxygenase (Fe-ARD) produces formate and 2-keto-4-methylthiobutyrate (KMTB), the alpha-ketoacid precursor of methionine in the methionine recycle pathway. Ni-containing acireductone dioxygenase (Ni-ARD) produces methylthiopropionate, carbon monoxide and formate, and does not lie on the methionine recycle pathway. The chain is Acireductone dioxygenase from Cronobacter sakazakii (strain ATCC BAA-894) (Enterobacter sakazakii).